The following is a 183-amino-acid chain: Oligoribonuclease (183 aa).

Residues 9 to 172 (LIWIDLEMTG…DDIRESIEEL (164 aa)) enclose the Exonuclease domain. Tyr-130 is an active-site residue.

It belongs to the oligoribonuclease family.

It is found in the cytoplasm. Functionally, 3'-to-5' exoribonuclease specific for small oligoribonucleotides. This is Oligoribonuclease from Haemophilus ducreyi (strain 35000HP / ATCC 700724).